Here is an 843-residue protein sequence, read N- to C-terminus: Protein P (843 aa).

A terminal protein domain (TP) region spans residues 1–177 (MPLSYQHFRR…FCGSPYSWEQ (177 aa)). The interval 178–346 (ELQHGSTSLN…YCLSHIINLL (169 aa)) is spacer. The disordered stretch occupies residues 228–316 (KQGQLANGKQ…VPPSTVGSES (89 aa)). Composition is skewed to polar residues over residues 262–276 (TGHS…TSRF), 286–299 (NPSL…TSTG), and 307–316 (VPPSTVGSES). The interval 347–690 (EDWGPCYEHG…YMNLYPVARQ (344 aa)) is polymerase/reverse transcriptase domain (RT). Residues 357–600 (EHHIRTPRTP…YSLHFMGYII (244 aa)) enclose the Reverse transcriptase domain. Mg(2+) contacts are provided by D429, D551, and D552.

Belongs to the hepadnaviridae P protein family.

The catalysed reaction is DNA(n) + a 2'-deoxyribonucleoside 5'-triphosphate = DNA(n+1) + diphosphate. The enzyme catalyses Endonucleolytic cleavage to 5'-phosphomonoester.. Its activity is regulated as follows. Activated by host HSP70 and HSP40 in vitro to be able to bind the epsilon loop of the pgRNA. Because deletion of the RNase H region renders the protein partly chaperone-independent, the chaperones may be needed indirectly to relieve occlusion of the RNA-binding site by this domain. Inhibited by several reverse-transcriptase inhibitors: Lamivudine, Adefovir and Entecavir. Its function is as follows. Multifunctional enzyme that converts the viral RNA genome into dsDNA in viral cytoplasmic capsids. This enzyme displays a DNA polymerase activity that can copy either DNA or RNA templates, and a ribonuclease H (RNase H) activity that cleaves the RNA strand of RNA-DNA heteroduplexes in a partially processive 3'- to 5'-endonucleasic mode. Neo-synthesized pregenomic RNA (pgRNA) are encapsidated together with the P protein, and reverse-transcribed inside the nucleocapsid. Initiation of reverse-transcription occurs first by binding the epsilon loop on the pgRNA genome, and is initiated by protein priming, thereby the 5'-end of (-)DNA is covalently linked to P protein. Partial (+)DNA is synthesized from the (-)DNA template and generates the relaxed circular DNA (RC-DNA) genome. After budding and infection, the RC-DNA migrates in the nucleus, and is converted into a plasmid-like covalently closed circular DNA (cccDNA). The activity of P protein does not seem to be necessary for cccDNA generation, and is presumably released from (+)DNA by host nuclear DNA repair machinery. This Homo sapiens (Human) protein is Protein P.